The chain runs to 342 residues: MKVTIKNINKEIYVFEVNGDLTVAELKNLISEKHNQTPSWQTLIYSGKILEDKRTLESYNITDSGFIVMMIKKPREAPATTPAPSTTPAPSTTSAPTTTTTAEPTPTTSSTNNTSTTTPTSVPTPTNNTPATPNPTPTTSSTPGSTSTTSPQQSSDFATGTELEATIKNITDMGFARDQVLRALRLTFNNAERAIEYLVSGNIPAANDPEDEEEMEGGGGSGDNPFEALRNHPHFNLLREAISKNPSIIPGILQQLAQTNPALVRQIQENPNEFIRLFQGDGNPGGNPGQFTLQVTQEESEAIQRLQALTGMDKSTVIEAYFACDKNEELTASYLFETADDE.

Positions 1–76 (MKVTIKNINK…IVMMIKKPRE (76 aa)) constitute a Ubiquitin-like domain. Residues 77–151 (APATTPAPST…TPGSTSTTSP (75 aa)) show a composition bias toward low complexity. Positions 77-157 (APATTPAPST…TTSPQQSSDF (81 aa)) are disordered. 2 UBA domains span residues 161–201 (TELE…LVSG) and 297–338 (QEES…LFET).

Belongs to the RAD23 family.

Its subcellular location is the nucleus. It is found in the cytoplasm. May play a role both in proteasomal degradation of misfolded proteins and DNA repair. This Dictyostelium discoideum (Social amoeba) protein is UV excision repair protein RAD23 homolog (rcbA).